The sequence spans 335 residues: Glyceraldehyde-3-phosphate dehydrogenase 1 (335 aa).

NAD(+)-binding positions include 13–14 and Gly-111; that span reads TI. 140-142 serves as a coordination point for D-glyceraldehyde 3-phosphate; it reads SCN. Cys-141 functions as the Nucleophile in the catalytic mechanism. Residue Arg-169 coordinates NAD(+). Residues Thr-171 and 195 to 196 contribute to the D-glyceraldehyde 3-phosphate site; that span reads HG. Gln-300 lines the NAD(+) pocket.

The protein belongs to the glyceraldehyde-3-phosphate dehydrogenase family. As to quaternary structure, homotetramer.

The protein resides in the cytoplasm. It catalyses the reaction D-glyceraldehyde 3-phosphate + phosphate + NADP(+) = (2R)-3-phospho-glyceroyl phosphate + NADPH + H(+). It carries out the reaction D-glyceraldehyde 3-phosphate + phosphate + NAD(+) = (2R)-3-phospho-glyceroyl phosphate + NADH + H(+). It participates in carbohydrate degradation; glycolysis; pyruvate from D-glyceraldehyde 3-phosphate: step 1/5. This Methanosarcina acetivorans (strain ATCC 35395 / DSM 2834 / JCM 12185 / C2A) protein is Glyceraldehyde-3-phosphate dehydrogenase 1 (gapA).